Consider the following 1040-residue polypeptide: Multidrug resistance protein MdtB (1040 aa).

12 consecutive transmembrane segments (helical) span residues 25–45 (LLMVAILLAGIIGYRFLPVAA), 342–362 (DTQFELMLAIALVVMIIYLFL), 369–389 (IIPGVAVPLSLIGTFAVMVFL), 396–416 (LTLMALTIATGFVVDDAIVVI), 440–460 (IGFTIISLTFSLIAVLIPLLF), 472–492 (FAVTLAVAILISAVVSLTLTP), 537–557 (WLTLSVALGTLLLSIMLWVFI), 863–883 (LGSTVWLIVAAVVAMYIVLGV), 888–908 (FIHPITILSTLPTAGVGALLA), 911–931 (IAGSELDVIAIIGIILLIGIV), 967–987 (PILMTTLAALLGALPLMLSTG), and 998–1018 (IGMVGGLLVSQVLTLFTTPVI).

It belongs to the resistance-nodulation-cell division (RND) (TC 2.A.6) family. MdtB subfamily. As to quaternary structure, part of a tripartite efflux system composed of MdtA, MdtB and MdtC. MdtB forms a heteromultimer with MdtC.

It is found in the cell inner membrane. In Citrobacter koseri (strain ATCC BAA-895 / CDC 4225-83 / SGSC4696), this protein is Multidrug resistance protein MdtB.